The primary structure comprises 428 residues: Adenylosuccinate synthetase (428 aa).

GTP-binding positions include 12–18 (GDEGKGK) and 40–42 (GHT). Asp13 serves as the catalytic Proton acceptor. 2 residues coordinate Mg(2+): Asp13 and Gly40. IMP contacts are provided by residues 13–16 (DEGK), 38–41 (NAGH), Thr129, Arg143, Gln224, Thr239, and Arg303. His41 acts as the Proton donor in catalysis. Residue 299–305 (VTTGRIR) participates in substrate binding. GTP is bound by residues Arg305, 331–333 (KVD), and 410–412 (AYG).

It belongs to the adenylosuccinate synthetase family. As to quaternary structure, homodimer. It depends on Mg(2+) as a cofactor.

The protein localises to the cytoplasm. The catalysed reaction is IMP + L-aspartate + GTP = N(6)-(1,2-dicarboxyethyl)-AMP + GDP + phosphate + 2 H(+). It participates in purine metabolism; AMP biosynthesis via de novo pathway; AMP from IMP: step 1/2. Plays an important role in the de novo pathway of purine nucleotide biosynthesis. Catalyzes the first committed step in the biosynthesis of AMP from IMP. The polypeptide is Adenylosuccinate synthetase (Francisella tularensis subsp. mediasiatica (strain FSC147)).